The primary structure comprises 184 residues: Photosystem I assembly protein Ycf4 (184 aa).

The next 2 membrane-spanning stretches (helical) occupy residues 22 to 42 (FCWAFILFLGSLGFLLVGTSS) and 57 to 77 (IIFFPQGIVMSFYGIAGLFIS).

Belongs to the Ycf4 family.

The protein localises to the plastid. The protein resides in the chloroplast thylakoid membrane. Functionally, seems to be required for the assembly of the photosystem I complex. This Olimarabidopsis pumila (Dwarf rocket) protein is Photosystem I assembly protein Ycf4.